We begin with the raw amino-acid sequence, 239 residues long: Large ribosomal subunit protein uL1 (239 aa).

The protein belongs to the universal ribosomal protein uL1 family. In terms of assembly, part of the 50S ribosomal subunit.

In terms of biological role, binds directly to 23S rRNA. The L1 stalk is quite mobile in the ribosome, and is involved in E site tRNA release. Its function is as follows. Protein L1 is also a translational repressor protein, it controls the translation of the L11 operon by binding to its mRNA. The protein is Large ribosomal subunit protein uL1 of Rickettsia rickettsii (strain Iowa).